A 285-amino-acid polypeptide reads, in one-letter code: Type II secretion system protein C (285 aa).

At 1-27 (MSKGIKMHNSVMRLTIPNKKIINYAPH) the chain is on the cytoplasmic side. The helical transmembrane segment at 28-46 (IVTSIILFFICQQLAQLTW) threads the bilayer. The Periplasmic portion of the chain corresponds to 47 to 285 (KIILPVNFTD…NDIYLALRDE (239 aa)).

Belongs to the GSP C family.

It localises to the cell inner membrane. Its function is as follows. Involved in a type II secretion system (T2SS, formerly general secretion pathway, GSP) for the export of proteins. Required for the translocation of pullulanase. The polypeptide is Type II secretion system protein C (pulC) (Klebsiella pneumoniae).